Here is a 315-residue protein sequence, read N- to C-terminus: Cysteine synthase (315 aa).

Hydrogen sulfide is bound by residues asparagine 8 and arginine 35. Residue lysine 42 is modified to N6-(pyridoxal phosphate)lysine. Residues asparagine 72 and 177 to 181 (GTGGT) each bind pyridoxal 5'-phosphate. Residue leucine 269 participates in hydrogen sulfide binding. Serine 273 lines the pyridoxal 5'-phosphate pocket.

This sequence belongs to the cysteine synthase/cystathionine beta-synthase family. Homodimer. It depends on pyridoxal 5'-phosphate as a cofactor.

The catalysed reaction is O-acetyl-L-serine + hydrogen sulfide = L-cysteine + acetate. It participates in amino-acid biosynthesis; L-cysteine biosynthesis; L-cysteine from L-serine: step 2/2. The protein is Cysteine synthase (cysK) of Buchnera aphidicola subsp. Acyrthosiphon pisum (strain APS) (Acyrthosiphon pisum symbiotic bacterium).